The sequence spans 311 residues: Methionyl-tRNA formyltransferase (311 aa).

Ser112–Pro115 contributes to the (6S)-5,6,7,8-tetrahydrofolate binding site.

This sequence belongs to the Fmt family.

It catalyses the reaction L-methionyl-tRNA(fMet) + (6R)-10-formyltetrahydrofolate = N-formyl-L-methionyl-tRNA(fMet) + (6S)-5,6,7,8-tetrahydrofolate + H(+). In terms of biological role, attaches a formyl group to the free amino group of methionyl-tRNA(fMet). The formyl group appears to play a dual role in the initiator identity of N-formylmethionyl-tRNA by promoting its recognition by IF2 and preventing the misappropriation of this tRNA by the elongation apparatus. This Chelativorans sp. (strain BNC1) protein is Methionyl-tRNA formyltransferase.